A 260-amino-acid polypeptide reads, in one-letter code: uncharacterized protein (260 aa).

This is an uncharacterized protein from Methanocaldococcus jannaschii (strain ATCC 43067 / DSM 2661 / JAL-1 / JCM 10045 / NBRC 100440) (Methanococcus jannaschii).